A 278-amino-acid chain; its full sequence is Phosphonates import ATP-binding protein PhnC 2 (278 aa).

Residues 5-253 (IRVDSLNKTF…FLNELYGAEG (249 aa)) form the ABC transporter domain. 37–44 (GASGSGKS) provides a ligand contact to ATP.

It belongs to the ABC transporter superfamily. Phosphonates importer (TC 3.A.1.9.1) family. In terms of assembly, the complex is composed of two ATP-binding proteins (PhnC), two transmembrane proteins (PhnE) and a solute-binding protein (PhnD).

It localises to the cell inner membrane. It carries out the reaction phosphonate(out) + ATP + H2O = phosphonate(in) + ADP + phosphate + H(+). Part of the ABC transporter complex PhnCDE involved in phosphonates import. Responsible for energy coupling to the transport system. In Pseudomonas aeruginosa (strain ATCC 15692 / DSM 22644 / CIP 104116 / JCM 14847 / LMG 12228 / 1C / PRS 101 / PAO1), this protein is Phosphonates import ATP-binding protein PhnC 2.